Consider the following 358-residue polypeptide: Protein-glutamate methylesterase/protein-glutamine glutaminase 1 (358 aa).

A Response regulatory domain is found at 8 to 125; sequence RVLIVDDSAV…ARGLEGYAEE (118 aa). Asp-59 is modified (4-aspartylphosphate). Residues 165-352 enclose the CheB-type methylesterase domain; the sequence is FRTTDRLIAI…LDRVAERLLA (188 aa). Active-site residues include Ser-177, His-203, and Asp-299.

This sequence belongs to the CheB family. Phosphorylated by CheA. Phosphorylation of the N-terminal regulatory domain activates the methylesterase activity.

The protein resides in the cytoplasm. The enzyme catalyses [protein]-L-glutamate 5-O-methyl ester + H2O = L-glutamyl-[protein] + methanol + H(+). It carries out the reaction L-glutaminyl-[protein] + H2O = L-glutamyl-[protein] + NH4(+). Functionally, involved in chemotaxis. Part of a chemotaxis signal transduction system that modulates chemotaxis in response to various stimuli. Catalyzes the demethylation of specific methylglutamate residues introduced into the chemoreceptors (methyl-accepting chemotaxis proteins or MCP) by CheR. Also mediates the irreversible deamidation of specific glutamine residues to glutamic acid. The polypeptide is Protein-glutamate methylesterase/protein-glutamine glutaminase 1 (Xanthomonas axonopodis pv. citri (strain 306)).